Here is a 222-residue protein sequence, read N- to C-terminus: Pyridoxine/pyridoxamine 5'-phosphate oxidase (222 aa).

Residues 14 to 17 (RRNY) and Lys71 contribute to the substrate site. FMN contacts are provided by residues 66–71 (RTVLLK), 81–82 (FT), Arg87, Lys88, and Gln110. Tyr128, Arg132, and Ser136 together coordinate substrate. Residues 145-146 (QS) and Trp190 each bind FMN. 196 to 198 (RLN) is a binding site for substrate. Arg200 contacts FMN.

This sequence belongs to the pyridoxamine 5'-phosphate oxidase family. In terms of assembly, homodimer. FMN serves as cofactor.

The catalysed reaction is pyridoxamine 5'-phosphate + O2 + H2O = pyridoxal 5'-phosphate + H2O2 + NH4(+). It catalyses the reaction pyridoxine 5'-phosphate + O2 = pyridoxal 5'-phosphate + H2O2. The protein operates within cofactor metabolism; pyridoxal 5'-phosphate salvage; pyridoxal 5'-phosphate from pyridoxamine 5'-phosphate: step 1/1. Its pathway is cofactor metabolism; pyridoxal 5'-phosphate salvage; pyridoxal 5'-phosphate from pyridoxine 5'-phosphate: step 1/1. Functionally, catalyzes the oxidation of either pyridoxine 5'-phosphate (PNP) or pyridoxamine 5'-phosphate (PMP) into pyridoxal 5'-phosphate (PLP). This is Pyridoxine/pyridoxamine 5'-phosphate oxidase from Prochlorococcus marinus (strain MIT 9303).